The sequence spans 243 residues: MKACRCITILTGAGISAESGISTFRDSNGLWCNHHVEDVASPDAFIRNPALVQLFYNERRRNLLLSSVKPNKAHTALAKLEEELSGKGKVFIVTQNVDNLHERAGSKNVLHMHGELLKARCTATGNVFEWQKDIVGDVDRCPDCGFLGTLRPHIVWFGEMPLCMDEIESILSTTDLFVAIGTSGNVYPAAGFVKRAQFYGATTLELNLQEGSNSTLFQESIYGKASSIVPTWVDQVLKESLKK.

Positions 1-239 constitute a Deacetylase sirtuin-type domain; it reads MKACRCITIL…PTWVDQVLKE (239 aa). 12 to 31 contributes to the NAD(+) binding site; that stretch reads GAGISAESGISTFRDSNGLW. Substrate contacts are provided by tyrosine 56 and arginine 59. 95 to 98 is an NAD(+) binding site; it reads QNVD. Histidine 113 acts as the Proton acceptor in catalysis. Positions 121 and 141 each coordinate Zn(2+). NAD(+) contacts are provided by residues 181–183 and alanine 225; that span reads GTS.

The protein belongs to the sirtuin family. Class III subfamily. It depends on Zn(2+) as a cofactor.

It is found in the mitochondrion. The enzyme catalyses N(6)-malonyl-L-lysyl-[protein] + NAD(+) + H2O = 2''-O-malonyl-ADP-D-ribose + nicotinamide + L-lysyl-[protein]. It catalyses the reaction N(6)-succinyl-L-lysyl-[protein] + NAD(+) + H2O = 2''-O-succinyl-ADP-D-ribose + nicotinamide + L-lysyl-[protein]. It carries out the reaction N(6)-glutaryl-L-lysyl-[protein] + NAD(+) + H2O = 2''-O-glutaryl-ADP-D-ribose + nicotinamide + L-lysyl-[protein]. Its function is as follows. NAD-dependent lysine demalonylase, desuccinylase and deglutarylase that specifically removes malonyl, succinyl and glutaryl groups on target proteins. Has weak NAD-dependent protein deacetylase activity; however this activity may not be physiologically relevant in vivo. This Leishmania major protein is NAD-dependent protein deacylase SIR2rp3 (SIR2rp3).